Consider the following 1110-residue polypeptide: Error-prone DNA polymerase (1110 aa).

The disordered stretch occupies residues 1072–1110 (LGELHEPLNDDRREHPDNPAQRIRHPRDVRILPPSRDFH). 2 stretches are compositionally biased toward basic and acidic residues: residues 1073 to 1088 (GELH…EHPD) and 1097 to 1110 (PRDV…RDFH).

Belongs to the DNA polymerase type-C family. DnaE2 subfamily.

It localises to the cytoplasm. It catalyses the reaction DNA(n) + a 2'-deoxyribonucleoside 5'-triphosphate = DNA(n+1) + diphosphate. DNA polymerase involved in damage-induced mutagenesis and translesion synthesis (TLS). It is not the major replicative DNA polymerase. This is Error-prone DNA polymerase from Rhodopseudomonas palustris (strain BisB5).